Consider the following 69-residue polypeptide: MSCFSFLVYFLLFIVTKMSQSPLSQSSHEFTVVSPYLSCFGIEECLFYLYFKLYDLCVILLCTWFDLSE.

Residues methionine 1–serine 19 form the signal peptide. Cysteine 45 and cysteine 57 are disulfide-bonded.

The protein belongs to the DEFL family.

The protein localises to the secreted. The protein is Putative defensin-like protein 312 of Arabidopsis thaliana (Mouse-ear cress).